A 530-amino-acid chain; its full sequence is 4,4'-diapolycopene aldehyde oxidase (530 aa).

Catalysis depends on residues E234 and C268.

This sequence belongs to the aldehyde dehydrogenase family.

The catalysed reaction is all-trans-4,4'-diapolycopen-4-al + A + H2O = all-trans-4,4'-diapolycopen-4-oate + AH2 + H(+). It catalyses the reaction all-trans-4,4'-diapolycopene-4,4'-dial + 2 A + 2 H2O = all-trans-4,4'-diapolycopene-4,4'-dioate + 2 AH2 + 2 H(+). The protein operates within carotenoid biosynthesis. Functionally, involved in the biosynthesis of C30 carotenoids. Catalyzes the oxidation of 4,4'-diapolycopene-4,4'-dial to yield 4,4'-diapolycopene-4,4'-dioic acid. Also able to catalyze the oxidation of 4,4'-diapolycopen-4-al to yield 4,4'-diapolycopen-4-oic acid. This is 4,4'-diapolycopene aldehyde oxidase from Methylomonas sp.